Here is a 317-residue protein sequence, read N- to C-terminus: Melanocyte-stimulating hormone receptor (317 aa).

At 1 to 37 the chain is on the extracellular side; sequence MPVQGSQRRLLGSLNSTPTATPRLGLAANQTGARCLE. N-linked (GlcNAc...) asparagine glycosylation is present at Asn29. Residues 38-63 traverse the membrane as a helical segment; that stretch reads VSIPDGLFLSLGLVSLVENVLVVVAI. The Cytoplasmic portion of the chain corresponds to 64-72; the sequence is ARNRNLHSP. The chain crosses the membrane as a helical span at residues 73–93; the sequence is MYCFICCLALSDLLVSGSNML. Over 94 to 118 the chain is Extracellular; that stretch reads DTAVILLLEAGALAARAAVVQQLDN. A helical transmembrane segment spans residues 119 to 140; the sequence is VIDVITCSSMLSSLCFLGAIAV. Over 141-163 the chain is Cytoplasmic; that stretch reads DRYISIFYALRYHSIVTLRRARR. The helical transmembrane segment at 164–183 threads the bilayer; it reads VVAAIWVASILFSTLFIAYC. Over 184–191 the chain is Extracellular; that stretch reads DHAAVLLC. Residues 192 to 211 traverse the membrane as a helical segment; it reads LVVFFLAMLVLMAVLYVHML. Topologically, residues 212-240 are cytoplasmic; sequence ARACQHAQGIAQLHKRQRPAHQGVGLKGA. The helical transmembrane segment at 241-266 threads the bilayer; that stretch reads ATLTILLGIFFLCWGPFFLHLTLIVL. Topologically, residues 267–279 are extracellular; the sequence is CPQHPTCSCIFKN. The helical transmembrane segment at 280–300 threads the bilayer; the sequence is FNLFLTLIICNAIIDPLIYAF. At 301 to 317 the chain is on the cytoplasmic side; that stretch reads RSQELRRTLKKVLLCSW. Cys315 is lipidated: S-palmitoyl cysteine.

Belongs to the G-protein coupled receptor 1 family. Interacts with MGRN1, but does not undergo MGRN1-mediated ubiquitination; this interaction competes with GNAS-binding and thus inhibits agonist-induced cAMP production. Interacts with OPN3; the interaction results in a decrease in MC1R-mediated cAMP signaling and ultimately a decrease in melanin production in melanocytes.

It localises to the cell membrane. Its function is as follows. Receptor for MSH (alpha, beta and gamma) and ACTH. The activity of this receptor is mediated by G proteins which activate adenylate cyclase. Mediates melanogenesis, the production of eumelanin (black/brown) and phaeomelanin (red/yellow), via regulation of cAMP signaling in melanocytes. The polypeptide is Melanocyte-stimulating hormone receptor (MC1R) (Trachypithecus francoisi (Francois' leaf monkey)).